Here is a 455-residue protein sequence, read N- to C-terminus: Squamosa promoter-binding-like protein 16 (455 aa).

The SBP-type zinc finger occupies 115–192; that stretch reads CPSCAVDGCK…DGHNRRRRKP (78 aa). Zn(2+)-binding residues include C118, C123, C140, H143, C159, C162, H166, and C178. The Bipartite nuclear localization signal motif lies at 175–191; the sequence is KRSCRKRLDGHNRRRRK. Positions 182–204 are disordered; it reads LDGHNRRRRKPQPDPMNSASYLA.

Expressed in young panicles.

Its subcellular location is the nucleus. Trans-acting factor that binds specifically to the consensus nucleotide sequence 5'-TNCGTACAA-3'. May be involved in panicle development. The protein is Squamosa promoter-binding-like protein 16 (SPL16) of Oryza sativa subsp. japonica (Rice).